Consider the following 131-residue polypeptide: uncharacterized protein (131 aa).

The chain crosses the membrane as a helical span at residues 17-39 (VILLILILLPVVFLHIMLATWGL).

The protein localises to the membrane. This is an uncharacterized protein from Archaeoglobus fulgidus (strain ATCC 49558 / DSM 4304 / JCM 9628 / NBRC 100126 / VC-16).